Here is a 131-residue protein sequence, read N- to C-terminus: Profilin (131 aa).

The protein belongs to the profilin family. In terms of assembly, occurs in many kinds of cells as a complex with monomeric actin in a 1:1 ratio.

It is found in the cytoplasm. The protein resides in the cytoskeleton. Its function is as follows. Binds to actin and affects the structure of the cytoskeleton. At high concentrations, profilin prevents the polymerization of actin, whereas it enhances it at low concentrations. By binding to PIP2, it inhibits the formation of IP3 and DG. The sequence is that of Profilin from Prunus persica (Peach).